The sequence spans 626 residues: Chaperone protein DnaK (626 aa).

Position 197 is a phosphothreonine; by autocatalysis (Thr197). Composition is skewed to basic and acidic residues over residues 512-528 and 539-551; these read DAEA…EAVE and QTEK…GEKI. Disordered stretches follow at residues 512–551 and 601–626; these read DAEA…GEKI and DQNA…AEVE.

It belongs to the heat shock protein 70 family.

Functionally, acts as a chaperone. The polypeptide is Chaperone protein DnaK (Campylobacter fetus subsp. fetus (strain 82-40)).